The sequence spans 287 residues: tRNA selenocysteine 1-associated protein 1 (287 aa).

2 consecutive RRM domains span residues 3-86 and 96-175; these read ASLW…YATY and YSLF…VAIP.

It belongs to the RRM TRSPAP family. As to quaternary structure, component of the tRNA(Sec) complex composed at least of EEFSEC, SECISBP2, SEPHS1, SEPSECS, TRNAU1AP and tRNA(Sec). Found in a complex with tRNA(Sec). Interacts with SEPSECS. Associates with mRNP and/or polysomes. Found in a complex with EEFSEC, SECISBP2, TRNAU1AP and tRNA(Sec).

Its subcellular location is the nucleus. The protein localises to the cytoplasm. Its function is as follows. Involved in the early steps of selenocysteine biosynthesis and tRNA(Sec) charging to the later steps resulting in the cotranslational incorporation of selenocysteine into selenoproteins. Stabilizes the SECISBP2, EEFSEC and tRNA(Sec) complex. May be involved in the methylation of tRNA(Sec). Enhances efficiency of selenoproteins synthesis. The chain is tRNA selenocysteine 1-associated protein 1 (TRNAU1AP) from Homo sapiens (Human).